A 339-amino-acid chain; its full sequence is Phenylalanine--tRNA ligase alpha subunit (339 aa).

Glu254 contacts Mg(2+).

Belongs to the class-II aminoacyl-tRNA synthetase family. Phe-tRNA synthetase alpha subunit type 1 subfamily. Tetramer of two alpha and two beta subunits. Mg(2+) serves as cofactor.

The protein localises to the cytoplasm. It carries out the reaction tRNA(Phe) + L-phenylalanine + ATP = L-phenylalanyl-tRNA(Phe) + AMP + diphosphate + H(+). This Chlamydia pneumoniae (Chlamydophila pneumoniae) protein is Phenylalanine--tRNA ligase alpha subunit (pheS).